The primary structure comprises 320 residues: Cytochrome f (320 aa).

A signal peptide spans 1-35 (MQTRKTFSWIKEQITRSISASLMIYIITRTSISSA). 4 residues coordinate heme: Y36, C56, C59, and H60. The chain crosses the membrane as a helical span at residues 286–306 (VQGLLFFLASVILAQIFLVLK).

The protein belongs to the cytochrome f family. The 4 large subunits of the cytochrome b6-f complex are cytochrome b6, subunit IV (17 kDa polypeptide, petD), cytochrome f and the Rieske protein, while the 4 small subunits are PetG, PetL, PetM and PetN. The complex functions as a dimer. Requires heme as cofactor.

It is found in the plastid. The protein localises to the chloroplast thylakoid membrane. In terms of biological role, component of the cytochrome b6-f complex, which mediates electron transfer between photosystem II (PSII) and photosystem I (PSI), cyclic electron flow around PSI, and state transitions. This chain is Cytochrome f, found in Panax ginseng (Korean ginseng).